A 250-amino-acid polypeptide reads, in one-letter code: Probable transcriptional regulatory protein DIP1378 (250 aa).

The segment at 1-22 (MSGHSKWATTKHKKAANDAKRG) is disordered.

It belongs to the TACO1 family.

Its subcellular location is the cytoplasm. The polypeptide is Probable transcriptional regulatory protein DIP1378 (Corynebacterium diphtheriae (strain ATCC 700971 / NCTC 13129 / Biotype gravis)).